Consider the following 194-residue polypeptide: Nucleoside triphosphate pyrophosphatase (194 aa).

Aspartate 71 functions as the Proton acceptor in the catalytic mechanism.

This sequence belongs to the Maf family. Requires a divalent metal cation as cofactor.

The protein localises to the cytoplasm. It carries out the reaction a ribonucleoside 5'-triphosphate + H2O = a ribonucleoside 5'-phosphate + diphosphate + H(+). The enzyme catalyses a 2'-deoxyribonucleoside 5'-triphosphate + H2O = a 2'-deoxyribonucleoside 5'-phosphate + diphosphate + H(+). Its function is as follows. Nucleoside triphosphate pyrophosphatase. May have a dual role in cell division arrest and in preventing the incorporation of modified nucleotides into cellular nucleic acids. The protein is Nucleoside triphosphate pyrophosphatase of Paramagnetospirillum magneticum (strain ATCC 700264 / AMB-1) (Magnetospirillum magneticum).